A 487-amino-acid polypeptide reads, in one-letter code: Glutamyl-tRNA(Gln) amidotransferase subunit A (487 aa).

Catalysis depends on charge relay system residues lysine 80 and serine 155. Catalysis depends on serine 179, which acts as the Acyl-ester intermediate.

It belongs to the amidase family. GatA subfamily. As to quaternary structure, heterotrimer of A, B and C subunits.

The catalysed reaction is L-glutamyl-tRNA(Gln) + L-glutamine + ATP + H2O = L-glutaminyl-tRNA(Gln) + L-glutamate + ADP + phosphate + H(+). Allows the formation of correctly charged Gln-tRNA(Gln) through the transamidation of misacylated Glu-tRNA(Gln) in organisms which lack glutaminyl-tRNA synthetase. The reaction takes place in the presence of glutamine and ATP through an activated gamma-phospho-Glu-tRNA(Gln). This is Glutamyl-tRNA(Gln) amidotransferase subunit A from Leptospira interrogans serogroup Icterohaemorrhagiae serovar Lai (strain 56601).